Here is a 150-residue protein sequence, read N- to C-terminus: Macrodomain Ter protein (150 aa).

It belongs to the MatP family. Homodimer.

Its subcellular location is the cytoplasm. Required for spatial organization of the terminus region of the chromosome (Ter macrodomain) during the cell cycle. Prevents early segregation of duplicated Ter macrodomains during cell division. Binds specifically to matS, which is a 13 bp signature motif repeated within the Ter macrodomain. This chain is Macrodomain Ter protein, found in Shigella dysenteriae serotype 1 (strain Sd197).